Reading from the N-terminus, the 74-residue chain is Putative defensin-like protein 186 (74 aa).

A signal peptide spans 1 to 22; the sequence is MKNSSIILVLVFFFFISSSGEA. Cystine bridges form between cysteine 25–cysteine 74, cysteine 31–cysteine 51, cysteine 37–cysteine 68, and cysteine 41–cysteine 70.

This sequence belongs to the DEFL family.

It localises to the secreted. This chain is Putative defensin-like protein 186 (LCR40), found in Arabidopsis thaliana (Mouse-ear cress).